The primary structure comprises 108 residues: Ig light chain C region (108 aa).

The Ig-like domain occupies 7-102; sequence PTVSIYCPSL…LTPALAKSFQ (96 aa). Disulfide bonds link Cys13/Cys106 and Cys28/Cys86.

The polypeptide is Ig light chain C region (Aquarana catesbeiana (American bullfrog)).